The following is a 282-amino-acid chain: Dihydroorotate dehydrogenase B (NAD(+)), electron transfer subunit homolog (282 aa).

The FAD-binding FR-type domain maps to 2-100 (GGTALNEIVK…VGPLGNPSEI (99 aa)). [2Fe-2S] cluster is bound by residues Cys-225, Cys-228, and Cys-240.

The protein belongs to the PyrK family. [2Fe-2S] cluster is required as a cofactor. The cofactor is FAD.

The protein is Dihydroorotate dehydrogenase B (NAD(+)), electron transfer subunit homolog of Thermotoga maritima (strain ATCC 43589 / DSM 3109 / JCM 10099 / NBRC 100826 / MSB8).